The chain runs to 124 residues: Small ribosomal subunit protein uS12c (124 aa).

Positions 104–124 are disordered; it reads SGGVKDRTQRRSKYGVKKPKS. Positions 113–124 are enriched in basic residues; it reads RRSKYGVKKPKS.

Belongs to the universal ribosomal protein uS12 family. Part of the 30S ribosomal subunit.

The protein resides in the plastid. Its subcellular location is the chloroplast. Its function is as follows. With S4 and S5 plays an important role in translational accuracy. Located at the interface of the 30S and 50S subunits. This is Small ribosomal subunit protein uS12c (rps12) from Thalassiosira pseudonana (Marine diatom).